We begin with the raw amino-acid sequence, 944 residues long: Bifunctional uridylyltransferase/uridylyl-removing enzyme (944 aa).

The segment at 1-371 (MRDLDFTNIL…RFTHRNRKIA (371 aa)) is uridylyltransferase. Positions 372-727 (GSVEFVEDRG…VRTDSFHAIT (356 aa)) are uridylyl-removing. The 117-residue stretch at 488 to 604 (VDEHLIRTVD…TDFADRVQSL (117 aa)) folds into the HD domain. 2 ACT domains span residues 728-809 (EITV…EVIA) and 839-918 (VIEV…LRER). Residues 911–944 (EEDELRERMPSGIIAPAATARTPPASEKKAGSPI) are disordered. Residues 925 to 935 (APAATARTPPA) are compositionally biased toward low complexity.

The protein belongs to the GlnD family. Mg(2+) serves as cofactor.

It catalyses the reaction [protein-PII]-L-tyrosine + UTP = [protein-PII]-uridylyl-L-tyrosine + diphosphate. It carries out the reaction [protein-PII]-uridylyl-L-tyrosine + H2O = [protein-PII]-L-tyrosine + UMP + H(+). Its activity is regulated as follows. Uridylyltransferase (UTase) activity is inhibited by glutamine, while glutamine likely activates uridylyl-removing (UR) activity. In terms of biological role, modifies, by uridylylation and deuridylylation, the PII regulatory proteins GlnB and GlnK, in response to the nitrogen status of the cell that GlnD senses through the glutamine level. Under low glutamine levels, catalyzes the conversion of the PII proteins and UTP to PII-UMP and PPi, while under higher glutamine levels, GlnD likely hydrolyzes PII-UMP to PII and UMP (deuridylylation). Thus, controls uridylylation state and activity of the PII proteins, and plays an important role in the regulation of nitrogen metabolism. In Rhizobium leguminosarum bv. viciae, this protein is Bifunctional uridylyltransferase/uridylyl-removing enzyme.